The chain runs to 353 residues: H(2)-forming methylenetetrahydromethanopterin dehydrogenase-related protein MJ1338 (353 aa).

It belongs to the HMD family.

The polypeptide is H(2)-forming methylenetetrahydromethanopterin dehydrogenase-related protein MJ1338 (Methanocaldococcus jannaschii (strain ATCC 43067 / DSM 2661 / JAL-1 / JCM 10045 / NBRC 100440) (Methanococcus jannaschii)).